The following is a 505-amino-acid chain: Cytochrome P450 52C1 (505 aa).

The helical transmembrane segment at 4–21 (LFCFLAGIIVVYKAAQYY) threads the bilayer. Cys453 is a heme binding site.

The protein belongs to the cytochrome P450 family. Requires heme as cofactor.

Its subcellular location is the membrane. Together with an NADPH cytochrome P450 the enzyme system catalyzes the terminal hydroxylation as the first step in the assimilation of alkanes and fatty acids. This chain is Cytochrome P450 52C1 (CYP52C1), found in Candida tropicalis (Yeast).